Consider the following 558-residue polypeptide: Hepatocyte nuclear factor 1-beta (558 aa).

Residues 1-31 are dimerization; the sequence is MVSKLTSLQQELLSALLSSGVTKEVLIQALE. Residues 1–32 enclose the HNF-p1 domain; the sequence is MVSKLTSLQQELLSALLSSGVTKEVLIQALEE. Phosphoserine occurs at positions 49, 52, 75, and 80. The tract at residues 66–85 is disordered; sequence TNGHAKGRLSGDEGSEDGDD. In terms of domain architecture, POU-specific atypical spans 93–188; sequence KELQALNTEE…ILRQFNQTVQ (96 aa). Residues 231–311 constitute a DNA-binding region (homeobox; HNF1-type); that stretch reads MRRNRFKWGP…NRRKEEAFRQ (81 aa). The tract at residues 323-348 is disordered; that stretch reads THNLNPLLTHGSPHHQPSSSPPNKMS.

This sequence belongs to the HNF1 homeobox family. In terms of assembly, binds DNA as a dimer. Can form homodimer or heterodimer with HNF1-alpha. Interacts (via HNF-p1 domain) with PCBD1; the interaction increases its transactivation activity.

It is found in the nucleus. Its function is as follows. Transcription factor that binds to the inverted palindrome 5'-GTTAATNATTAAC-3'. Binds to the FPC element in the cAMP regulatory unit of the PLAU gene. Transcriptional activity is increased by coactivator PCBD1. The sequence is that of Hepatocyte nuclear factor 1-beta (Hnf1b) from Mus musculus (Mouse).